The following is a 769-amino-acid chain: P-selectin (769 aa).

The first 32 residues, Met-1–Glu-32, serve as a signal peptide directing secretion. Over Leu-33–Ala-717 the chain is Extracellular. N-linked (GlcNAc...) asparagine glycans are attached at residues Asn-54 and Asn-80. Residues Ala-58–Cys-158 form the C-type lectin domain. 21 disulfides stabilise this stretch: Cys-60-Cys-158, Cys-131-Cys-150, Cys-163-Cys-174, Cys-168-Cys-183, Cys-185-Cys-194, Cys-200-Cys-244, Cys-230-Cys-257, Cys-262-Cys-306, Cys-292-Cys-319, Cys-324-Cys-368, Cys-354-Cys-381, Cys-386-Cys-430, Cys-416-Cys-443, Cys-448-Cys-492, Cys-478-Cys-505, Cys-510-Cys-554, Cys-540-Cys-567, Cys-581-Cys-625, Cys-611-Cys-638, Cys-643-Cys-687, and Cys-673-Cys-700. The Ca(2+) site is built by Glu-121, Asn-123, and Asn-124. Position 123 (Asn-123) interacts with a carbohydrate. A carbohydrate-binding residues include Glu-133 and Asn-146. 2 residues coordinate Ca(2+): Asn-146 and Asp-147. The 37-residue stretch at Tyr-159–Glu-195 folds into the EGF-like domain. Residue Asn-180 is glycosylated (N-linked (GlcNAc...) asparagine). 8 Sushi domains span residues Arg-198–Ala-259, Val-260–Ala-321, Ile-322–Ala-383, Leu-384–Ala-445, Val-446–Ala-507, Ser-508–Val-569, Leu-579–Ala-640, and Val-641–Ala-702. N-linked (GlcNAc...) asparagine glycosylation is found at Asn-212 and Asn-219. N-linked (GlcNAc...) asparagine glycosylation is present at Asn-347. The N-linked (GlcNAc...) asparagine glycan is linked to Asn-398. Asn-604 carries an N-linked (GlcNAc...) asparagine glycan. Asn-655, Asn-662, and Asn-680 each carry an N-linked (GlcNAc...) asparagine glycan. A helical transmembrane segment spans residues Ala-718–Leu-734. Over Arg-735–Pro-769 the chain is Cytoplasmic. Positions Gln-740–Pro-769 are disordered. The Endocytosis signal motif lies at Tyr-757–Phe-760. The interaction with SNX17 stretch occupies residues Phe-760–Pro-769.

This sequence belongs to the selectin/LECAM family. In terms of assembly, interacts with SNX17. Interacts with SELPLG/PSGL1 and PODXL2 and mediates neutrophil adhesion and leukocyte rolling. This interaction requires the sialyl-Lewis X epitope of SELPLG and PODXL2, and specific tyrosine sulfation on SELPLG. Interacts (via C-type lectin domain) with alpha-IIb/beta3 integrin ITGA2B:ITGB3 and alpha-V/beta-3 integrin ITGAV:ITGB3. Interacts with alpha5/beta1 integrin ITGA5:ITGB1 and alpha4/beta1 integrin ITGA4:ITGB.

It is found in the cell membrane. Ca(2+)-dependent receptor for myeloid cells that binds to carbohydrates on neutrophils and monocytes. Mediates the interaction of activated endothelial cells or platelets with leukocytes. The ligand recognized is sialyl-Lewis X. Mediates rapid rolling of leukocyte rolling over vascular surfaces during the initial steps in inflammation through interaction with SELPLG. Mediates cell-cell interactions and cell adhesion via the interaction with integrin alpha-IIb/beta3 (ITGA2B:ITGB3) and integrin alpha-V/beta-3 (ITGAV:ITGB3). The sequence is that of P-selectin (SELP) from Ovis aries (Sheep).